The primary structure comprises 377 residues: Lactosylceramide 1,3-N-acetyl-beta-D-glucosaminyltransferase A (377 aa).

Residues 1 to 12 (MLISARRLRRCQ) are Cytoplasmic-facing. A helical; Signal-anchor for type II membrane protein membrane pass occupies residues 13 to 30 (FLQLLASCFVLSLMALLV). Over 31–377 (QEDNSLISHV…DTYPCSAAWS (347 aa)) the chain is Lumenal. N-linked (GlcNAc...) asparagine glycans are attached at residues Asn-56, Asn-167, and Asn-275.

Belongs to the glycosyltransferase 31 family.

It is found in the golgi apparatus membrane. The enzyme catalyses a beta-D-Gal-(1-&gt;4)-beta-D-Glc-(1&lt;-&gt;1)-Cer(d18:1(4E)) + UDP-N-acetyl-alpha-D-glucosamine = a beta-D-GlcNAc-(1-&gt;3)-beta-D-Gal-(1-&gt;4)-beta-D-Glc-(1&lt;-&gt;1)-Cer(d18:1(4E)) + UDP + H(+). It catalyses the reaction a neolactoside nLc4Cer(d18:1(4E)) + UDP-N-acetyl-alpha-D-glucosamine = a neolactoside IV(3)-beta-GlcNAc-nLc4Cer(d18:1(4E)) + UDP + H(+). It functions in the pathway protein modification; protein glycosylation. Functionally, beta-1,3-N-acetylglucosaminyltransferase that plays a key role in the synthesis of lacto- or neolacto-series carbohydrate chains on glycolipids. The sequence is that of Lactosylceramide 1,3-N-acetyl-beta-D-glucosaminyltransferase A (b3gnt5-a) from Xenopus laevis (African clawed frog).